A 587-amino-acid chain; its full sequence is Pescadillo homolog (587 aa).

Positions 267-306 (LKKKEEKNDEEGKNLSKKELNKAIKADQEQQENDEQDNNN) form a coiled coil. The segment at 290–311 (IKADQEQQENDEQDNNNGESVE) is disordered. Acidic residues predominate over residues 295-311 (EQQENDEQDNNNGESVE). Residues 335-434 (STAELFSKFI…ELINVNEYAA (100 aa)) enclose the BRCT domain. The interval 437–587 (TLPPHLSPWG…KKKEQLKKLN (151 aa)) is disordered. Over residues 459 to 494 (KEDGEAEEDTDEEEEEVEIEDGDEDQEDEEEEEDED) the composition is skewed to acidic residues. Residues 470–587 (EEEEEVEIED…KKKEQLKKLN (118 aa)) adopt a coiled-coil conformation. 3 stretches are compositionally biased toward basic and acidic residues: residues 529–541 (SNKE…ELKK), 559–569 (IEKKENREKQL), and 578–587 (KKKEQLKKLN).

It belongs to the pescadillo family. As to quaternary structure, component of the NOP7 complex, composed of ERB1, NOP7 and YTM1. The complex is held together by ERB1, which interacts with NOP7 via its N-terminal domain and with YTM1 via a high-affinity interaction between the seven-bladed beta-propeller domains of the 2 proteins. The NOP7 complex associates with the 66S pre-ribosome.

The protein resides in the nucleus. Its subcellular location is the nucleolus. It localises to the nucleoplasm. Its function is as follows. Component of the NOP7 complex, which is required for maturation of the 25S and 5.8S ribosomal RNAs and formation of the 60S ribosome. Required for the transition from hyphal to yeast growth. The polypeptide is Pescadillo homolog (Candida albicans (strain SC5314 / ATCC MYA-2876) (Yeast)).